The primary structure comprises 2883 residues: Desmoplakin (2883 aa).

Positions 1–21 (MSCNGGSHPRINTLGRMTRAE) are disordered. The interaction with PKP1, JUP, PKP2 stretch occupies residues 1-596 (MSCNGGSHPR…DYMKTIEDLE (596 aa)). Residues 1-1068 (MSCNGGSHPR…ANSENCNKNK (1068 aa)) form a globular 1 region. Ser22 carries the post-translational modification Phosphoserine. Thr59 carries the phosphothreonine modification. Ser65 carries the phosphoserine modification. A Phosphotyrosine modification is found at Tyr68. Thr73 is modified (phosphothreonine). Residues Ser177, Ser178, and Ser188 each carry the phosphoserine modification. 2 Spectrin repeats span residues 190–283 (SGWD…HLRQ) and 284–387 (LQNI…LKEN). Residues 388-458 (AAYFQFFEEA…NLVNKSKKIV (71 aa)) form a Spectrin 3a repeat. The 58-residue stretch at 470–527 (NKPIILRALCDYKQDQKIVHKGDECILKDNNERSKWYVTGPGGVDMLVPSVGLIIPPP) folds into the SH3 domain. A Spectrin 3b repeat occupies 528–557 (NPLAVDLSCKIEQYYEAILALWNQLYINMK). Spectrin repeat units lie at residues 558-639 (SLVS…IQLP), 666-781 (VIET…SLCS), and 782-895 (VRAL…DLEK). Residues 1034 to 1956 (KSLEDLKLKN…LQKEIEKLRQ (923 aa)) adopt a coiled-coil conformation. The segment at 1069 to 1957 (FLDQNLQKYQ…QKEIEKLRQR (889 aa)) is central fibrous rod domain. Phosphoserine occurs at positions 1670, 1720, and 2036. The tract at residues 1958–2882 (PYGSHRETQT…YSFSSSSIGG (925 aa)) is globular 2. Residues 1972-2220 (TVDSSKLVFD…LLLSVQKRSM (249 aa)) are 4.5 X 38 AA tandem repeats (Domain A). Plectin repeat units lie at residues 2021–2057 (QPFL…PEST), 2058–2095 (VMLL…FDDR), 2096–2133 (QQIY…RETG), 2134–2171 (MRLL…RDLY), 2175–2209 (NDPR…PHTG), 2210–2245 (LLLL…PSTV), 2263–2300 (KDFL…PGTA), 2301–2338 (LELL…IEFK), 2339–2376 (EKLL…KGHG), 2377–2414 (IRLL…EELS), 2418–2452 (SDPS…EETG), 2468–2505 (SQKN…YDTF), 2519–2556 (TITG…RKFF), 2622–2659 (SDPL…SITG), 2660–2697 (QRLL…QDMA), 2736–2773 (QRFL…GRAA), and 2774–2811 (QRLQ…DITG). Phosphoserine is present on residues Ser2219, Ser2221, and Ser2237. A 4.5 X 38 AA tandem repeats (Domain B) region spans residues 2256-2458 (DEVGERIKDF…EETGLCLLPL (203 aa)). A lipid anchor (Omega-hydroxyceramide glutamate ester) is attached at Gln2492. Residues 2621-2833 (LSDPLEESSP…GLPSPYNMSA (213 aa)) form a 4.5 X 38 AA tandem repeats (Domain C) region. Ser2822 and Ser2827 each carry phosphoserine. The tract at residues 2822–2883 (SKGLPSPYNM…SFSSSSIGGY (62 aa)) is disordered. The residue at position 2829 (Tyr2829) is a Phosphotyrosine. Residues Ser2832 and Ser2836 each carry the phosphoserine modification. The segment at 2835-2858 (GSRSGSRSGSRSGSRSGSRSGSRR) is 6 X 4 AA tandem repeats of G-S-R-[SR]. Over residues 2835-2858 (GSRSGSRSGSRSGSRSGSRSGSRR) the composition is skewed to low complexity. Omega-N-methylarginine is present on residues Arg2837 and Arg2858. A Phosphoserine modification is found at Ser2860. Phosphothreonine is present on Thr2864. The span at 2867 to 2883 (SSYSYSYSFSSSSIGGY) shows a compositional bias: low complexity. Ser2879 is subject to Phosphoserine.

This sequence belongs to the plakin or cytolinker family. In terms of assembly, homodimer. Interacts with COL17A1 (via cytoplasmic region). Interacts with DSC2. Interacts with PKP1. Interacts with PKP2. Interacts weakly with TMEM65. Post-translationally, phosphorylation at Ser-2860 increases association with intermediate filament cytokeratin, potentially facilitating interaction between desmosome junctions and intermediate filament architecture. In terms of tissue distribution, expressed in undifferentiated keratinocytes of the epidermis at birth, expression increases as differentiation proceeds (at protein level). Abundantly expressed in the suprabasal layers and weakly in the basal layers of the outer hair root sheath (at protein level). Expressed at intercalated disks in cardiomyocytes (at protein level).

The protein resides in the cell junction. Its subcellular location is the desmosome. The protein localises to the cell membrane. It is found in the cytoplasm. Major high molecular weight protein of desmosomes. Regulates profibrotic gene expression in cardiomyocytes via activation of the MAPK14/p38 MAPK signaling cascade and increase in TGFB1 protein abundance. This chain is Desmoplakin, found in Mus musculus (Mouse).